A 332-amino-acid chain; its full sequence is Nucleotide-binding protein RC1_2868 (332 aa).

The interval M1–G27 is disordered. Residues T10–T22 show a composition bias toward low complexity. G36 to S43 is an ATP binding site. D82–T85 lines the GTP pocket. Basic and acidic residues-rich tracts occupy residues G302–A312 and V322–R332. Residues G302–R332 form a disordered region.

Belongs to the RapZ-like family.

Its function is as follows. Displays ATPase and GTPase activities. This chain is Nucleotide-binding protein RC1_2868, found in Rhodospirillum centenum (strain ATCC 51521 / SW).